We begin with the raw amino-acid sequence, 139 residues long: Putative pre-16S rRNA nuclease (139 aa).

The protein belongs to the YqgF nuclease family.

It is found in the cytoplasm. Its function is as follows. Could be a nuclease involved in processing of the 5'-end of pre-16S rRNA. The sequence is that of Putative pre-16S rRNA nuclease from Dictyoglomus thermophilum (strain ATCC 35947 / DSM 3960 / H-6-12).